The primary structure comprises 232 residues: Enolase-phosphatase E1 (232 aa).

It belongs to the HAD-like hydrolase superfamily. MasA/MtnC family. In terms of assembly, monomer. Requires Mg(2+) as cofactor.

It catalyses the reaction 5-methylsulfanyl-2,3-dioxopentyl phosphate + H2O = 1,2-dihydroxy-5-(methylsulfanyl)pent-1-en-3-one + phosphate. The protein operates within amino-acid biosynthesis; L-methionine biosynthesis via salvage pathway; L-methionine from S-methyl-5-thio-alpha-D-ribose 1-phosphate: step 3/6. It participates in amino-acid biosynthesis; L-methionine biosynthesis via salvage pathway; L-methionine from S-methyl-5-thio-alpha-D-ribose 1-phosphate: step 4/6. Its function is as follows. Bifunctional enzyme that catalyzes the enolization of 2,3-diketo-5-methylthiopentyl-1-phosphate (DK-MTP-1-P) into the intermediate 2-hydroxy-3-keto-5-methylthiopentenyl-1-phosphate (HK-MTPenyl-1-P), which is then dephosphorylated to form the acireductone 1,2-dihydroxy-3-keto-5-methylthiopentene (DHK-MTPene). The polypeptide is Enolase-phosphatase E1 (Xanthomonas campestris pv. campestris (strain 8004)).